A 959-amino-acid polypeptide reads, in one-letter code: MMS19 nucleotide excision repair protein (959 aa).

HEAT repeat units lie at residues 794–828 (QKLF…ATPQ), 832–871 (KLNI…QQDT), 874–915 (QGHL…YPTF), and 918–956 (LPHK…VGAP).

This sequence belongs to the MET18/MMS19 family. As to quaternary structure, component of the CIA complex. Interacts with Xpd and galla-2. Binds to microtubules. As to expression, expressed in embryos (at protein level).

It localises to the cytoplasm. Its subcellular location is the cytoskeleton. The protein resides in the spindle. The protein localises to the nucleus. It is found in the midbody. Its function is as follows. Key component of the cytosolic iron-sulfur protein assembly (CIA) complex, a multiprotein complex that mediates the incorporation of iron-sulfur cluster into apoproteins specifically involved in DNA metabolism and genomic integrity. In the CIA complex, MMS19 acts as an adapter between early-acting CIA components and a subset of cellular target iron-sulfur proteins. Essential for diploid cell cycles, organ growth and development. Regulates mitosis by binding to Xpd and thereby competing with the Xpd-mediated repression on the Cdk-activating kinase (CAK) complex. Regulates the centrosomal localization of the MT regulator tacc, a downstream target of aurA kinase. Binds to microtubules (MT). Regulates spindle and astral MT growth, MT stability and bundling. In neuroblasts, necessary for timely and coordinated spindle assembly and orientation which is necessary for mitotic progression. In young embryos, the maternal protein is important for progression through mitosis. This Drosophila melanogaster (Fruit fly) protein is MMS19 nucleotide excision repair protein.